The following is a 447-amino-acid chain: N-succinylarginine dihydrolase (447 aa).

Residues 19–28, asparagine 110, and 137–138 contribute to the substrate site; these read AGLSFGNEAS and HR. Glutamate 174 is an active-site residue. Arginine 212 serves as a coordination point for substrate. The active site involves histidine 248. Substrate is bound by residues aspartate 250 and asparagine 359. Cysteine 365 acts as the Nucleophile in catalysis.

This sequence belongs to the succinylarginine dihydrolase family. In terms of assembly, homodimer.

It catalyses the reaction N(2)-succinyl-L-arginine + 2 H2O + 2 H(+) = N(2)-succinyl-L-ornithine + 2 NH4(+) + CO2. It functions in the pathway amino-acid degradation; L-arginine degradation via AST pathway; L-glutamate and succinate from L-arginine: step 2/5. Functionally, catalyzes the hydrolysis of N(2)-succinylarginine into N(2)-succinylornithine, ammonia and CO(2). This Salmonella agona (strain SL483) protein is N-succinylarginine dihydrolase.